Here is a 307-residue protein sequence, read N- to C-terminus: Aspartate carbamoyltransferase catalytic subunit (307 aa).

Carbamoyl phosphate-binding residues include Arg51 and Thr52. Residue Lys80 participates in L-aspartate binding. 3 residues coordinate carbamoyl phosphate: Arg101, His129, and Gln132. Residues Arg162 and Arg225 each contribute to the L-aspartate site. 2 residues coordinate carbamoyl phosphate: Leu264 and Pro265.

This sequence belongs to the aspartate/ornithine carbamoyltransferase superfamily. ATCase family. As to quaternary structure, heterododecamer (2C3:3R2) of six catalytic PyrB chains organized as two trimers (C3), and six regulatory PyrI chains organized as three dimers (R2).

The enzyme catalyses carbamoyl phosphate + L-aspartate = N-carbamoyl-L-aspartate + phosphate + H(+). It functions in the pathway pyrimidine metabolism; UMP biosynthesis via de novo pathway; (S)-dihydroorotate from bicarbonate: step 2/3. Its function is as follows. Catalyzes the condensation of carbamoyl phosphate and aspartate to form carbamoyl aspartate and inorganic phosphate, the committed step in the de novo pyrimidine nucleotide biosynthesis pathway. The chain is Aspartate carbamoyltransferase catalytic subunit from Lachnoclostridium phytofermentans (strain ATCC 700394 / DSM 18823 / ISDg) (Clostridium phytofermentans).